Reading from the N-terminus, the 487-residue chain is N-succinylglutamate 5-semialdehyde dehydrogenase (487 aa).

221 to 226 lines the NAD(+) pocket; it reads GSSDTG. Residues glutamate 244 and cysteine 278 contribute to the active site.

It belongs to the aldehyde dehydrogenase family. AstD subfamily.

The catalysed reaction is N-succinyl-L-glutamate 5-semialdehyde + NAD(+) + H2O = N-succinyl-L-glutamate + NADH + 2 H(+). The protein operates within amino-acid degradation; L-arginine degradation via AST pathway; L-glutamate and succinate from L-arginine: step 4/5. Functionally, catalyzes the NAD-dependent reduction of succinylglutamate semialdehyde into succinylglutamate. The sequence is that of N-succinylglutamate 5-semialdehyde dehydrogenase from Paraburkholderia xenovorans (strain LB400).